Consider the following 614-residue polypeptide: Cathepsin F (614 aa).

The N-terminal stretch at 1-20 (MRLFAAATVALVLLLGQAAG) is a signal peptide. The propeptide at 21–393 (EELAEERAGQ…AAVVPAYHGE (373 aa)) is activation peptide. Positions 25–50 (EERAGQAQGDAESTESSETTTDQAVS) are disordered. Residues 29 to 45 (GQAQGDAESTESSETTT) show a composition bias toward low complexity. Asn-151 carries an N-linked (GlcNAc...) asparagine glycan. 2 cysteine pairs are disulfide-bonded: Cys-415–Cys-456 and Cys-449–Cys-489. Cys-418 is an active-site residue. N-linked (GlcNAc...) asparagine glycosylation is found at Asn-492 and Asn-510. A disulfide bond links Cys-548 and Cys-602. Residues His-555 and Asn-581 contribute to the active site.

The protein belongs to the peptidase C1 family.

The enzyme catalyses The recombinant enzyme cleaves synthetic substrates with Phe and Leu (better than Val) in P2, with high specificity constant (kcat/Km) comparable to that of cathepsin L.. Its function is as follows. May have a role in autophagic cell death. This Drosophila melanogaster (Fruit fly) protein is Cathepsin F.